The following is a 144-amino-acid chain: Large ribosomal subunit protein uL16 (144 aa).

Basic residues predominate over residues 1–16; the sequence is MLVPKRVKHRKVQRGK. Residues 1-20 are disordered; sequence MLVPKRVKHRKVQRGKMRGE.

This sequence belongs to the universal ribosomal protein uL16 family. Part of the 50S ribosomal subunit.

In terms of biological role, binds 23S rRNA and is also seen to make contacts with the A and possibly P site tRNAs. The polypeptide is Large ribosomal subunit protein uL16 (Limosilactobacillus fermentum (strain NBRC 3956 / LMG 18251) (Lactobacillus fermentum)).